Reading from the N-terminus, the 581-residue chain is NADH-quinone oxidoreductase subunit C/D (581 aa).

An NADH dehydrogenase I subunit C region spans residues 1 to 172 (MSASELVTEL…PLFNMTASLF (172 aa)). Residues 196–581 (ELMILNYGPH…IDYVMSDVDR (386 aa)) are NADH dehydrogenase I subunit D.

The protein in the N-terminal section; belongs to the complex I 30 kDa subunit family. In the C-terminal section; belongs to the complex I 49 kDa subunit family. As to quaternary structure, NDH-1 is composed of 13 different subunits. Subunits NuoB, CD, E, F, and G constitute the peripheral sector of the complex.

The protein resides in the cell inner membrane. The catalysed reaction is a quinone + NADH + 5 H(+)(in) = a quinol + NAD(+) + 4 H(+)(out). Its function is as follows. NDH-1 shuttles electrons from NADH, via FMN and iron-sulfur (Fe-S) centers, to quinones in the respiratory chain. The immediate electron acceptor for the enzyme in this species is believed to be ubiquinone. Couples the redox reaction to proton translocation (for every two electrons transferred, four hydrogen ions are translocated across the cytoplasmic membrane), and thus conserves the redox energy in a proton gradient. This chain is NADH-quinone oxidoreductase subunit C/D, found in Rhodopseudomonas palustris (strain TIE-1).